Reading from the N-terminus, the 259-residue chain is Ribosomal RNA small subunit methyltransferase A (259 aa).

6 residues coordinate S-adenosyl-L-methionine: Asn13, Leu15, Gly40, Glu61, Asp85, and Asn103.

The protein belongs to the class I-like SAM-binding methyltransferase superfamily. rRNA adenine N(6)-methyltransferase family. RsmA subfamily.

It localises to the cytoplasm. It catalyses the reaction adenosine(1518)/adenosine(1519) in 16S rRNA + 4 S-adenosyl-L-methionine = N(6)-dimethyladenosine(1518)/N(6)-dimethyladenosine(1519) in 16S rRNA + 4 S-adenosyl-L-homocysteine + 4 H(+). Specifically dimethylates two adjacent adenosines (A1518 and A1519) in the loop of a conserved hairpin near the 3'-end of 16S rRNA in the 30S particle. May play a critical role in biogenesis of 30S subunits. The sequence is that of Ribosomal RNA small subunit methyltransferase A from Neisseria gonorrhoeae (strain ATCC 700825 / FA 1090).